We begin with the raw amino-acid sequence, 405 residues long: CLIP domain-containing serine protease B8 (405 aa).

Residues 1–24 form the signal peptide; the sequence is MSSAVLLLLVCGCALAVLSPVAYG. 3 disulfides stabilise this stretch: Cys41-Cys94, Cys52-Cys84, and Cys58-Cys95. One can recognise a Clip domain in the interval 41–95; sequence CDIPNEPNPGQCMLPAECVAYGKINDVSSLSSIERFSFIKQIQCNGSDTVPYVCC. Asn85 and Asn108 each carry an N-linked (GlcNAc...) asparagine glycan. The 268-residue stretch at 137–404 folds into the Peptidase S1 domain; that stretch reads IRGGQLAEID…YLPWIKMYTG (268 aa). An intrachain disulfide couples Cys167 to Cys183. Residues His182 and Asp249 each act as charge relay system in the active site. 2 cysteine pairs are disulfide-bonded: Cys322-Cys339 and Cys349-Cys380. The Charge relay system role is filled by Ser353.

Belongs to the peptidase S1 family. CLIP subfamily. In terms of processing, proteolytic cleavage is necessary for activation. Cleaved and activated by CLIPB4.

It is found in the secreted. Its function is as follows. Serine protease that functions in the melanization-mediated immune response. Preferentially, cleaves substrates with an arginine at the P1 site. May be involved in the activation of the prophenoloxidase cascade upstream of CLIPB9; does not cleave prophenoloxidase. This Anopheles gambiae (African malaria mosquito) protein is CLIP domain-containing serine protease B8.